Here is a 267-residue protein sequence, read N- to C-terminus: tRNA-cytidine(32) 2-sulfurtransferase 1 (267 aa).

Positions 42–47 (SGGKDS) match the PP-loop motif motif. 3 residues coordinate [4Fe-4S] cluster: Cys117, Cys120, and Cys208.

It belongs to the TtcA family. As to quaternary structure, homodimer. It depends on Mg(2+) as a cofactor. The cofactor is [4Fe-4S] cluster.

Its subcellular location is the cytoplasm. It catalyses the reaction cytidine(32) in tRNA + S-sulfanyl-L-cysteinyl-[cysteine desulfurase] + AH2 + ATP = 2-thiocytidine(32) in tRNA + L-cysteinyl-[cysteine desulfurase] + A + AMP + diphosphate + H(+). Its pathway is tRNA modification. Functionally, catalyzes the ATP-dependent 2-thiolation of cytidine in position 32 of tRNA, to form 2-thiocytidine (s(2)C32). The sulfur atoms are provided by the cysteine/cysteine desulfurase (IscS) system. This chain is tRNA-cytidine(32) 2-sulfurtransferase 1, found in Francisella tularensis subsp. tularensis (strain FSC 198).